A 107-amino-acid chain; its full sequence is MNTFLLSALCLGAWAALVGAVTVQDGDFSFSLESVKKLKDLQEAPESKVQGRRKFVAPPLCSFSGFPEELRPVCKEPNSQDILNRLAVIAQDPSTCEICAYAACAGC.

The signal sequence occupies residues 1–20; it reads MNTFLLSALCLGAWAALVGA. Residues 21–92 constitute a propeptide that is removed on maturation; sequence VTVQDGDFSF…LNRLAVIAQD (72 aa). Cystine bridges form between cysteine 61–cysteine 74, cysteine 96–cysteine 104, and cysteine 99–cysteine 107.

This sequence belongs to the guanylin family.

The protein resides in the secreted. Functionally, endogenous activator of intestinal guanylate cyclase. It stimulates this enzyme through the same receptor binding region as the heat-stable enterotoxins. The protein is Guanylin (GUCA2A) of Cavia porcellus (Guinea pig).